The chain runs to 1026 residues: Retinoblastoma-related protein 1 (1026 aa).

The tract at residues 416–616 is domain A; the sequence is TPVSTAMTTA…EKGSSMYNSL (201 aa). The pocket stretch occupies residues 416–872; sequence TPVSTAMTTA…NEVFIPSVKP (457 aa). The tract at residues 617–737 is spacer; the sequence is AVARPALSVE…PGGGGETCAE (121 aa). The interval 656-680 is disordered; the sequence is PVPSLPKPEPMSAQNGDPRSPKRPC. The segment at 738-872 is domain B; it reads TGISVFFSKI…NEVFIPSVKP (135 aa). The segment at 1007–1026 is disordered; it reads QNGSSASSSGAPLKSEQPDS.

It belongs to the retinoblastoma protein (RB) family.

It localises to the nucleus. Its function is as follows. Regulator of biological processes that recruits a histone deacetylase to control gene transcription. May play a role in the entry into mitosis, negatively regulating the cell proliferation. Formation of stable complexes with geminiviridae replication-associated proteins may create a cellular environment which favors viral DNA replication. This chain is Retinoblastoma-related protein 1 (RBR1), found in Pisum sativum (Garden pea).